Here is a 208-residue protein sequence, read N- to C-terminus: Protein-L-isoaspartate O-methyltransferase (208 aa).

Serine 59 is a catalytic residue.

It belongs to the methyltransferase superfamily. L-isoaspartyl/D-aspartyl protein methyltransferase family.

It is found in the cytoplasm. The enzyme catalyses [protein]-L-isoaspartate + S-adenosyl-L-methionine = [protein]-L-isoaspartate alpha-methyl ester + S-adenosyl-L-homocysteine. Catalyzes the methyl esterification of L-isoaspartyl residues in peptides and proteins that result from spontaneous decomposition of normal L-aspartyl and L-asparaginyl residues. It plays a role in the repair and/or degradation of damaged proteins. In Escherichia coli O7:K1 (strain IAI39 / ExPEC), this protein is Protein-L-isoaspartate O-methyltransferase.